A 449-amino-acid polypeptide reads, in one-letter code: mRNA-capping enzyme subunit alpha (449 aa).

Lys66 (N6-GMP-lysine intermediate) is an active-site residue. The segment at 405 to 449 is disordered; it reads DERKNGAYQHHSSSFSESRQQPKAEPVAEKKQTEPKYVDDDDWSD. Polar residues predominate over residues 414–423; sequence HHSSSFSESR. The segment covering 424–442 has biased composition (basic and acidic residues); the sequence is QQPKAEPVAEKKQTEPKYV.

It belongs to the eukaryotic GTase family. Heterodimer. The mRNA-capping enzyme is composed of two separate chains alpha and beta, respectively a mRNA guanylyltransferase and an mRNA 5'-triphosphate monophosphatase.

Its subcellular location is the nucleus. The enzyme catalyses a 5'-end diphospho-ribonucleoside in mRNA + GTP + H(+) = a 5'-end (5'-triphosphoguanosine)-ribonucleoside in mRNA + diphosphate. In terms of biological role, second step of mRNA capping. Transfer of the GMP moiety of GTP to the 5'-end of RNA via an enzyme-GMP covalent reaction intermediate. The protein is mRNA-capping enzyme subunit alpha (CEG1) of Candida glabrata (strain ATCC 2001 / BCRC 20586 / JCM 3761 / NBRC 0622 / NRRL Y-65 / CBS 138) (Yeast).